Here is a 433-residue protein sequence, read N- to C-terminus: Tol-Pal system protein TolB (433 aa).

A signal peptide spans 1–21 (MRNLLRGMLVVICCMAGIAAA).

This sequence belongs to the TolB family. In terms of assembly, the Tol-Pal system is composed of five core proteins: the inner membrane proteins TolA, TolQ and TolR, the periplasmic protein TolB and the outer membrane protein Pal. They form a network linking the inner and outer membranes and the peptidoglycan layer.

The protein localises to the periplasm. Functionally, part of the Tol-Pal system, which plays a role in outer membrane invagination during cell division and is important for maintaining outer membrane integrity. The chain is Tol-Pal system protein TolB from Pseudomonas fluorescens (strain ATCC BAA-477 / NRRL B-23932 / Pf-5).